We begin with the raw amino-acid sequence, 223 residues long: UPF0441 protein ETA_04310 (223 aa).

Positions 166 to 223 are disordered; it reads YGAATPGRTMTVPKSALAPKPATTSTVTRGGFGESVAKQNTMQRNSSSTGSANRSMGG. Residues 202-223 are compositionally biased toward polar residues; sequence AKQNTMQRNSSSTGSANRSMGG.

The protein belongs to the UPF0441 family.

This chain is UPF0441 protein ETA_04310, found in Erwinia tasmaniensis (strain DSM 17950 / CFBP 7177 / CIP 109463 / NCPPB 4357 / Et1/99).